The following is a 276-amino-acid chain: Vitamin B12-binding protein (276 aa).

The signal sequence occupies residues 1–20 (MIVRFLCWLTGLLLCTAAYA). One can recognise a Fe/B12 periplasmic-binding domain in the interval 24-273 (RVISLAPHAT…QLTALSPGSS (250 aa)). Cysteine 186 and cysteine 262 are joined by a disulfide.

This sequence belongs to the BtuF family. In terms of assembly, the complex is composed of two ATP-binding proteins (BtuD), two transmembrane proteins (BtuC) and a solute-binding protein (BtuF).

The protein resides in the periplasm. Part of the ABC transporter complex BtuCDF involved in vitamin B12 import. Binds vitamin B12 and delivers it to the periplasmic surface of BtuC. This chain is Vitamin B12-binding protein, found in Pectobacterium carotovorum subsp. carotovorum (strain PC1).